A 258-amino-acid chain; its full sequence is Ribosomal RNA small subunit methyltransferase J (258 aa).

S-adenosyl-L-methionine-binding positions include 107–108 (RD), 123–124 (ER), 159–160 (SS), and Asp-177.

Belongs to the methyltransferase superfamily. RsmJ family.

The protein resides in the cytoplasm. The catalysed reaction is guanosine(1516) in 16S rRNA + S-adenosyl-L-methionine = N(2)-methylguanosine(1516) in 16S rRNA + S-adenosyl-L-homocysteine + H(+). In terms of biological role, specifically methylates the guanosine in position 1516 of 16S rRNA. This chain is Ribosomal RNA small subunit methyltransferase J, found in Shewanella sediminis (strain HAW-EB3).